Here is a 118-residue protein sequence, read N- to C-terminus: Small ribosomal subunit protein uS13 (118 aa).

The tract at residues 92 to 118 is disordered; it reads RRSLPVRGQRTKTNARTRKGPRKPIKK.

Belongs to the universal ribosomal protein uS13 family. In terms of assembly, part of the 30S ribosomal subunit. Forms a loose heterodimer with protein S19. Forms two bridges to the 50S subunit in the 70S ribosome.

Located at the top of the head of the 30S subunit, it contacts several helices of the 16S rRNA. In the 70S ribosome it contacts the 23S rRNA (bridge B1a) and protein L5 of the 50S subunit (bridge B1b), connecting the 2 subunits; these bridges are implicated in subunit movement. Contacts the tRNAs in the A and P-sites. This is Small ribosomal subunit protein uS13 from Acinetobacter baumannii (strain AB307-0294).